A 340-amino-acid polypeptide reads, in one-letter code: HTH-type transcriptional regulator GalS (340 aa).

The HTH lacI-type domain maps to 1–56; sequence MITIRDVARQAGVSVATVSRVLNNSALVSPDTRDAVMQAVTLLGYRPNANAQALAT. The H-T-H motif DNA-binding region spans 4-23; the sequence is IRDVARQAGVSVATVSRVLN.

As to quaternary structure, homodimer.

Its function is as follows. Repressor of the mgl operon. Binds galactose and D-fucose as inducers. GalS binds to an operator DNA sequence within its own coding sequence. This is HTH-type transcriptional regulator GalS (galS) from Salmonella typhimurium (strain LT2 / SGSC1412 / ATCC 700720).